The chain runs to 388 residues: Gastricsin (388 aa).

The N-terminal stretch at Met1–Ala16 is a signal peptide. A propeptide spans Thr17–Leu59 (activation peptide). The Peptidase A1 domain maps to Tyr73 to Ala385. Asp91 is an active-site residue. Disulfide bonds link Cys104/Cys109 and Cys267/Cys271. Asp276 is a catalytic residue. Residues Cys310 and Cys343 are joined by a disulfide bond.

It belongs to the peptidase A1 family.

It localises to the secreted. It catalyses the reaction More restricted specificity than pepsin A, but shows preferential cleavage at Tyr-|-Xaa bonds. High activity on hemoglobin.. Its activity is regulated as follows. Inhibited by pepstatin. Its function is as follows. Hydrolyzes a variety of proteins. This chain is Gastricsin (PGC), found in Callithrix jacchus (White-tufted-ear marmoset).